The following is a 379-amino-acid chain: MAVGLQKLVHYKRIVIKIGSALLVDPQTGLRAEWLKSLISDVANLHQKGVEILLVSSGAIALGRTLLRLPKGALKLEESQACAALGQIELAKTYSDTLAQYGLKTGQILLTLFDTEERRRYLNARATINVLLRFGAVPVINENDTVATSEIRYGDNDRLAARVATMMGADLLILLSDIDGLYTKSPHRDPTAEFIPFIASITSDIEKMADVAHSELSRGGMKTKLDAGKIANSAGTAMIITSGKRMNPLAAIDRGERGSFFAAGEKPVNAWKTWISGHLDPSGILMIDQGAVKALESGKSLLAAGVVAIEGRFNRGDTVAIVDTNGVEIARGLVSYGKDESVRIMGRKSEEIESILGYEARSAMVHRNDMVLRCLTDSA.

ATP is bound at residue lysine 17. Residues serine 57, aspartate 144, and asparagine 156 each coordinate substrate. 176–177 provides a ligand contact to ATP; that stretch reads SD. The region spanning 282 to 359 is the PUA domain; the sequence is SGILMIDQGA…EEIESILGYE (78 aa).

It belongs to the glutamate 5-kinase family.

The protein localises to the cytoplasm. It catalyses the reaction L-glutamate + ATP = L-glutamyl 5-phosphate + ADP. It functions in the pathway amino-acid biosynthesis; L-proline biosynthesis; L-glutamate 5-semialdehyde from L-glutamate: step 1/2. Its function is as follows. Catalyzes the transfer of a phosphate group to glutamate to form L-glutamate 5-phosphate. The sequence is that of Glutamate 5-kinase from Bartonella henselae (strain ATCC 49882 / DSM 28221 / CCUG 30454 / Houston 1) (Rochalimaea henselae).